Here is a 540-residue protein sequence, read N- to C-terminus: Chaperonin GroEL (540 aa).

ATP is bound by residues threonine 29–proline 32, aspartate 86–threonine 90, glycine 413, asparagine 476–alanine 478, and aspartate 492.

The protein belongs to the chaperonin (HSP60) family. Forms a cylinder of 14 subunits composed of two heptameric rings stacked back-to-back. Interacts with the co-chaperonin GroES.

It is found in the cytoplasm. It carries out the reaction ATP + H2O + a folded polypeptide = ADP + phosphate + an unfolded polypeptide.. Functionally, together with its co-chaperonin GroES, plays an essential role in assisting protein folding. The GroEL-GroES system forms a nano-cage that allows encapsulation of the non-native substrate proteins and provides a physical environment optimized to promote and accelerate protein folding. In Streptococcus sanguinis, this protein is Chaperonin GroEL.